Reading from the N-terminus, the 396-residue chain is MTRRLFTSESVTEGHPDKIADQISDAVLDAILAQDPQARVACETAVTTGLVLVIGEITTSCYVDIPKVVRETIREIGYTRAKYGFDGDTCAVITSIDEQSPDIALGVNRALEAKTGEMTDDEIEAIGAGDQGMMFGYATNETPELMPMPISLAHRLARRLAEVRKSRLLPYLRPDGKTQVTVEYDGDKPVRVDTIVVSTQHHPDVSQEEIRKDIIEHVVKPVIPEHLLDENTRYFVNPTGRFVIGGPQGDAGLTGRKIIVDTYGGMARHGGGAFSGKDPTKVDRSAAYAARYVAKNIVAAGIADKIEIQLAYAIGVAKPVSIMVDTFGTGKIADEKIVELIKKHFDLRPAGIIRMLDLRRPIYKQTAAYGHFGRTDIDLPWERIDKAEILRMEAGL.

An ATP-binding site is contributed by His-15. Asp-17 lines the Mg(2+) pocket. K(+) is bound at residue Glu-43. Positions 56 and 99 each coordinate L-methionine. Residues 99–109 (QSPDIALGVNR) form a flexible loop region. Residues 175-177 (DGK), 241-242 (RF), Asp-250, 256-257 (RK), Ala-273, and Lys-277 each bind ATP. Asp-250 provides a ligand contact to L-methionine. Lys-281 lines the L-methionine pocket.

It belongs to the AdoMet synthase family. Homotetramer; dimer of dimers. The cofactor is Mg(2+). K(+) serves as cofactor.

It is found in the cytoplasm. It catalyses the reaction L-methionine + ATP + H2O = S-adenosyl-L-methionine + phosphate + diphosphate. The protein operates within amino-acid biosynthesis; S-adenosyl-L-methionine biosynthesis; S-adenosyl-L-methionine from L-methionine: step 1/1. Catalyzes the formation of S-adenosylmethionine (AdoMet) from methionine and ATP. The overall synthetic reaction is composed of two sequential steps, AdoMet formation and the subsequent tripolyphosphate hydrolysis which occurs prior to release of AdoMet from the enzyme. The polypeptide is S-adenosylmethionine synthase (Carboxydothermus hydrogenoformans (strain ATCC BAA-161 / DSM 6008 / Z-2901)).